The sequence spans 520 residues: ATP-dependent clpX-like chaperone, mitochondrial (520 aa).

Residues 1-13 constitute a mitochondrion transit peptide; it reads MLKSASQNFFRAY. 140–147 is a binding site for ATP; that stretch reads GPSGSGKT.

This sequence belongs to the ClpX chaperone family. Homohexamer that forms a ring structure; this hexamerization requires ATP binding. Interacts with HEM1.

The protein localises to the mitochondrion inner membrane. ATP-dependent unfoldase that stimulates the incorporation of the pyridoxal phosphate cofactor into 5-aminolevulinate synthase (HEM1), thereby activating 5-aminolevulinate (ALA) synthesis, the first step in heme biosynthesis. Up-regulates heme biosynthesis. The chain is ATP-dependent clpX-like chaperone, mitochondrial from Saccharomyces cerevisiae (strain ATCC 204508 / S288c) (Baker's yeast).